We begin with the raw amino-acid sequence, 231 residues long: Enolase-phosphatase E1 (231 aa).

It belongs to the HAD-like hydrolase superfamily. MasA/MtnC family. In terms of assembly, monomer. Mg(2+) serves as cofactor.

The enzyme catalyses 5-methylsulfanyl-2,3-dioxopentyl phosphate + H2O = 1,2-dihydroxy-5-(methylsulfanyl)pent-1-en-3-one + phosphate. It participates in amino-acid biosynthesis; L-methionine biosynthesis via salvage pathway; L-methionine from S-methyl-5-thio-alpha-D-ribose 1-phosphate: step 3/6. It functions in the pathway amino-acid biosynthesis; L-methionine biosynthesis via salvage pathway; L-methionine from S-methyl-5-thio-alpha-D-ribose 1-phosphate: step 4/6. Functionally, bifunctional enzyme that catalyzes the enolization of 2,3-diketo-5-methylthiopentyl-1-phosphate (DK-MTP-1-P) into the intermediate 2-hydroxy-3-keto-5-methylthiopentenyl-1-phosphate (HK-MTPenyl-1-P), which is then dephosphorylated to form the acireductone 1,2-dihydroxy-3-keto-5-methylthiopentene (DHK-MTPene). This Stenotrophomonas maltophilia (strain K279a) protein is Enolase-phosphatase E1.